A 55-amino-acid polypeptide reads, in one-letter code: Chromatin protein Cren7 (55 aa).

It belongs to the Cren7 family. As to quaternary structure, monomer. Post-translationally, methylated at multiple sites, to varying extents.

The protein resides in the chromosome. It localises to the cytoplasm. Functionally, a chromatin protein, binds double-stranded DNA without sequence specificity. Constrains negative DNA supercoils. The polypeptide is Chromatin protein Cren7 (Ignicoccus hospitalis (strain KIN4/I / DSM 18386 / JCM 14125)).